The chain runs to 94 residues: MLKPLGDRVVIEVLEAEEKTASGIVLPDSAKEKPQSGKIVAVGSGRVLDNGTKEPLEVAEGDTVIFAKYSGTEVTYEGTDYLILRESDILAISK.

It belongs to the GroES chaperonin family. In terms of assembly, heptamer of 7 subunits arranged in a ring. Interacts with the chaperonin GroEL.

Its subcellular location is the cytoplasm. Together with the chaperonin GroEL, plays an essential role in assisting protein folding. The GroEL-GroES system forms a nano-cage that allows encapsulation of the non-native substrate proteins and provides a physical environment optimized to promote and accelerate protein folding. GroES binds to the apical surface of the GroEL ring, thereby capping the opening of the GroEL channel. This chain is Co-chaperonin GroES, found in Listeria innocua serovar 6a (strain ATCC BAA-680 / CLIP 11262).